The primary structure comprises 146 residues: NADH-quinone oxidoreductase subunit A (146 aa).

3 helical membrane passes run 4–24 (IYHW…VFML), 63–83 (LIAM…AWAI), and 91–111 (IGFS…IYLI).

Belongs to the complex I subunit 3 family. As to quaternary structure, NDH-1 is composed of 13 different subunits. Subunits NuoA, H, J, K, L, M, N constitute the membrane sector of the complex.

Its subcellular location is the cell inner membrane. The enzyme catalyses a quinone + NADH + 5 H(+)(in) = a quinol + NAD(+) + 4 H(+)(out). In terms of biological role, NDH-1 shuttles electrons from NADH, via FMN and iron-sulfur (Fe-S) centers, to quinones in the respiratory chain. The immediate electron acceptor for the enzyme in this species is believed to be ubiquinone. Couples the redox reaction to proton translocation (for every two electrons transferred, four hydrogen ions are translocated across the cytoplasmic membrane), and thus conserves the redox energy in a proton gradient. In Blochmanniella pennsylvanica (strain BPEN), this protein is NADH-quinone oxidoreductase subunit A.